Here is a 188-residue protein sequence, read N- to C-terminus: Pro-adrenomedullin (188 aa).

Residues 1–21 (MKLVPVALLYLGSLAFLGADT) form the signal peptide. Residue Arg41 is modified to Arginine amide. A propeptide spanning residues 45-92 (ELRVSSSYPTGLAEVKAGPAQTLIRTQDVKGASRNPQTSGPDAARIRV) is cleaved from the precursor. Residues Cys110 and Cys115 are joined by a disulfide bond. The interval 131–176 (DKDGVAPRSKISPQGYGRRRRRSLPEPGLRRTLLFPEPRPGGAPAP) is disordered. Tyr146 bears the Tyrosine amide mark. Positions 153–188 (SLPEPGLRRTLLFPEPRPGGAPAPRAHQVLANLLKM) are cleaved as a propeptide — preproAM C-terminal fragment.

The protein belongs to the adrenomedullin family.

The protein localises to the secreted. Its function is as follows. Adrenomedullin/ADM and proadrenomedullin N-20 terminal peptide/PAMP are peptide hormones that act as potent hypotensive and vasodilatator agents. Numerous actions have been reported most related to the physiologic control of fluid and electrolyte homeostasis. Functionally, ADM function is mediated by the CALCRL-RAMP2 and CALCRL-RAMP3 receptor complexes with ADM showing the highest potency for the CALCRL-RAMP2 complex. This is Pro-adrenomedullin (ADM) from Canis lupus familiaris (Dog).